The sequence spans 545 residues: MESQRNILLIGLLFVSFLLWQQWQADKAPQPVAAAQTQSSIPASTVADAHSSDVPDADSAVPEATPASKELITVITDQLEIKIDPVGGDIVYSALLSHKLEEKGDDPFVLLEQTNDIYYIAQSGLIGRDGIDSSVKGRAHFDSASREYKLADGQETLNVPLTYVSDKGVAYTKVFVFTRGKYNIAVDYKINNTSDAQLQVQMYGQIKHSIKKSESSMMMPTYRGGAFSTADTRYEKYSFDDMADKNLDKSTLGGWVAMLQHYFVSAWVPPANDKNIIFSSVSAGGLANIGFRGALYDIAPGTEQSIKAEFYVGPKDQEALSALSPSLNLVVDYGFLWWLAVPIYKLLMFFQSIVGNWGIAIILITLTVRGMLYPLTKAQYTSMAKMRNLQPKLAELKERFGDDRQKMGQAMMELYKKEKVNPMGGCLPILLQMPIFIALYWVLLESVELRHAPFMLWITDLSVQDPYYVMPILMGISMFVMQKMQPMAPTMDPMQVKMMQWMPVIFTVFFLWFPAGLVLYWLVGNLVAITQQKIIYAGLEKKGLK.

The helical transmembrane segment at 6–26 (NILLIGLLFVSFLLWQQWQAD) threads the bilayer. The segment at 44–65 (STVADAHSSDVPDADSAVPEAT) is disordered. The next 4 helical transmembrane spans lie at 346-366 (LLMF…LITL), 424-444 (GGCL…WVLL), 461-481 (LSVQ…MFVM), and 504-524 (VIFT…WLVG).

Belongs to the OXA1/ALB3/YidC family. Type 1 subfamily. Interacts with the Sec translocase complex via SecD. Specifically interacts with transmembrane segments of nascent integral membrane proteins during membrane integration.

Its subcellular location is the cell inner membrane. Its function is as follows. Required for the insertion and/or proper folding and/or complex formation of integral membrane proteins into the membrane. Involved in integration of membrane proteins that insert both dependently and independently of the Sec translocase complex, as well as at least some lipoproteins. Aids folding of multispanning membrane proteins. The sequence is that of Membrane protein insertase YidC from Shewanella pealeana (strain ATCC 700345 / ANG-SQ1).